The chain runs to 834 residues: Ras GTPase-activating protein 3 (834 aa).

2 consecutive C2 domains span residues M1–F112 and V123–Y263. Position 2 is an N-acetylalanine (A2). Position 66 is a phosphotyrosine (Y66). S77 carries the phosphoserine modification. The residue at position 110 (T110) is a Phosphothreonine. The Ras-GAP domain maps to G346 to I561. A PH domain is found at I576 to Q677. The Btk-type zinc-finger motif lies at N679–G715. Positions 687, 698, 699, and 709 each coordinate Zn(2+). Residues S809 and S833 each carry the phosphoserine modification.

In terms of tissue distribution, high levels in brain, lower in spleen and lung.

Inhibitory regulator of the Ras-cyclic AMP pathway. May bind inositol tetrakisphosphate (IP4). This Mus musculus (Mouse) protein is Ras GTPase-activating protein 3 (Rasa3).